The following is a 1218-amino-acid chain: Stress response protein nst1 (1218 aa).

Positions methionine 1 to threonine 26 are enriched in polar residues. Disordered regions lie at residues methionine 1–arginine 237, alanine 306–aspartate 391, arginine 431–glutamate 508, glutamate 544–histidine 745, proline 765–lysine 810, proline 911–glutamate 1010, alanine 1018–proline 1037, and glycine 1190–phenylalanine 1218. Residues threonine 34 to threonine 50 show a composition bias toward low complexity. Polar residues predominate over residues methionine 51–proline 72. Residues asparagine 75 to glutamine 85 show a composition bias toward basic residues. Residues alanine 86–glutamine 95 show a composition bias toward low complexity. Basic and acidic residues predominate over residues aspartate 107 to glycine 123. Residues leucine 124–aspartate 149 are compositionally biased toward acidic residues. The span at glycine 159–asparagine 171 shows a compositional bias: polar residues. Over residues lysine 174–lysine 183 the composition is skewed to basic residues. The span at serine 206–serine 216 shows a compositional bias: low complexity. Residues serine 224–arginine 237 are compositionally biased toward basic and acidic residues. The segment covering glycine 313–arginine 322 has biased composition (pro residues). A compositionally biased stretch (acidic residues) spans leucine 354–glutamate 382. The stretch at isoleucine 421–glutamate 714 forms a coiled coil. The span at arginine 431–glutamate 440 shows a compositional bias: basic and acidic residues. Over residues proline 470–threonine 501 the composition is skewed to acidic residues. The span at glutamate 544–leucine 715 shows a compositional bias: basic and acidic residues. The segment covering serine 716–histidine 730 has biased composition (low complexity). Over residues arginine 769–threonine 796 the composition is skewed to polar residues. The segment covering proline 799–lysine 810 has biased composition (pro residues). Residues proline 940–glutamine 963 show a composition bias toward polar residues.

Belongs to the NST1 family.

It is found in the cytoplasm. May act as a negative regulator of salt tolerance. This Botryotinia fuckeliana (strain B05.10) (Noble rot fungus) protein is Stress response protein nst1 (nst1).